We begin with the raw amino-acid sequence, 393 residues long: Probable xylan O-acetyltransferase 11 (393 aa).

Topologically, residues 1–9 are cytoplasmic; sequence MHQPAIMQR. A helical; Signal-anchor for type II membrane protein transmembrane segment spans residues 10-26; it reads ALAVVALLAAAAAIAAA. Residues 27-393 lie on the Lumenal side of the membrane; it reads QGESPELLPF…LFFPARDEAI (367 aa). 4 disulfide bridges follow: C45/C96, C67/C132, C76/C368, and C283/C364. The N-linked (GlcNAc...) asparagine glycan is linked to N102. The GDS motif motif lies at 119–121; sequence GDS. Catalysis depends on S121, which acts as the Nucleophile. A glycan (N-linked (GlcNAc...) asparagine) is linked at N325. D363 functions as the Proton donor in the catalytic mechanism. The DXXH motif signature appears at 363 to 366; it reads DCTH. H366 functions as the Proton acceptor in the catalytic mechanism.

The protein belongs to the PC-esterase family. TBL subfamily. As to expression, expressed in roots, leaves and stems.

Its subcellular location is the golgi apparatus membrane. Functionally, probable xylan acetyltransferase required for 2-O- and 3-O-monoacetylation of xylosyl residues in xylan. Possesses extremely low activity in vitro. The sequence is that of Probable xylan O-acetyltransferase 11 from Oryza sativa subsp. japonica (Rice).